The primary structure comprises 232 residues: Small ribosomal subunit protein uS3 (232 aa).

Residues 39 to 107 (VRQFLTKELA…PAQINIAEVR (69 aa)) form the KH type-2 domain.

Belongs to the universal ribosomal protein uS3 family. Part of the 30S ribosomal subunit. Forms a tight complex with proteins S10 and S14.

Functionally, binds the lower part of the 30S subunit head. Binds mRNA in the 70S ribosome, positioning it for translation. The protein is Small ribosomal subunit protein uS3 of Yersinia pseudotuberculosis serotype O:1b (strain IP 31758).